Reading from the N-terminus, the 127-residue chain is Large ribosomal subunit protein bL12 (127 aa).

Belongs to the bacterial ribosomal protein bL12 family. In terms of assembly, homodimer. Part of the ribosomal stalk of the 50S ribosomal subunit. Forms a multimeric L10(L12)X complex, where L10 forms an elongated spine to which 2 to 4 L12 dimers bind in a sequential fashion. Binds GTP-bound translation factors.

Forms part of the ribosomal stalk which helps the ribosome interact with GTP-bound translation factors. Is thus essential for accurate translation. The protein is Large ribosomal subunit protein bL12 of Streptomyces coelicolor (strain ATCC BAA-471 / A3(2) / M145).